Consider the following 272-residue polypeptide: 3-methyl-2-oxobutanoate hydroxymethyltransferase (272 aa).

Mg(2+) is bound by residues Asp50 and Asp89. Residues 50 to 51, Asp89, and Lys119 contribute to the 3-methyl-2-oxobutanoate site; that span reads DS. Mg(2+) is bound at residue Glu121. Residue Glu188 is the Proton acceptor of the active site.

It belongs to the PanB family. As to quaternary structure, homodecamer; pentamer of dimers. It depends on Mg(2+) as a cofactor.

It localises to the cytoplasm. It carries out the reaction 3-methyl-2-oxobutanoate + (6R)-5,10-methylene-5,6,7,8-tetrahydrofolate + H2O = 2-dehydropantoate + (6S)-5,6,7,8-tetrahydrofolate. It functions in the pathway cofactor biosynthesis; (R)-pantothenate biosynthesis; (R)-pantoate from 3-methyl-2-oxobutanoate: step 1/2. Its function is as follows. Catalyzes the reversible reaction in which hydroxymethyl group from 5,10-methylenetetrahydrofolate is transferred onto alpha-ketoisovalerate to form ketopantoate. This chain is 3-methyl-2-oxobutanoate hydroxymethyltransferase, found in Methylobacterium radiotolerans (strain ATCC 27329 / DSM 1819 / JCM 2831 / NBRC 15690 / NCIMB 10815 / 0-1).